Consider the following 266-residue polypeptide: MGGVKRKIAIEKIQNKNPRAVSFSKRRKGLYSKASELCLLSDAEIAIIATPVSSNSNAAFYSFGHSSVDNVVAAFLANQRPCDERFWWEDESLLKSENLEELREAMDSMSTMLRDLKELEKQRDHQTQTLIHQPCSARVCIQDYVTVNFDGFNTEEQTLAVSDNSNNNGLLGNLDECNEDFDDLDQIFDTVTNSEFLSVNLEMDDVTVNSEGNTEEQTLAVSDNSNNNGLLGNLDECNEDFDDLDQIIEYLTSSEALSMNLKMDDV.

An MADS-box domain is found at 3 to 63 (GVKRKIAIEK…SNSNAAFYSF (61 aa)). The stretch at 88 to 130 (WEDESLLKSENLEELREAMDSMSTMLRDLKELEKQRDHQTQTL) forms a coiled coil.

In terms of assembly, interacts with AGL27 and AGL62.

It is found in the nucleus. Its function is as follows. Putative transcription factor. The sequence is that of Agamous-like MADS-box protein AGL97 (AGL97) from Arabidopsis thaliana (Mouse-ear cress).